Consider the following 375-residue polypeptide: Chaperone protein DnaJ (375 aa).

Residues 5-69 (DYYEILGVSK…QKRAAYDQYG (65 aa)) form the J domain. The CR-type zinc finger occupies 130–208 (GVTKEIRIPT…CHGHGRVEKA (79 aa)). Residues C143, C146, C160, C163, C182, C185, C196, and C199 each contribute to the Zn(2+) site. 4 CXXCXGXG motif repeats span residues 143 to 150 (CGVCHGSG), 160 to 167 (CPTCHGQG), 182 to 189 (CPHCHGRG), and 196 to 203 (CNSCHGHG).

This sequence belongs to the DnaJ family. In terms of assembly, homodimer. Requires Zn(2+) as cofactor.

It localises to the cytoplasm. Participates actively in the response to hyperosmotic and heat shock by preventing the aggregation of stress-denatured proteins and by disaggregating proteins, also in an autonomous, DnaK-independent fashion. Unfolded proteins bind initially to DnaJ; upon interaction with the DnaJ-bound protein, DnaK hydrolyzes its bound ATP, resulting in the formation of a stable complex. GrpE releases ADP from DnaK; ATP binding to DnaK triggers the release of the substrate protein, thus completing the reaction cycle. Several rounds of ATP-dependent interactions between DnaJ, DnaK and GrpE are required for fully efficient folding. Also involved, together with DnaK and GrpE, in the DNA replication of plasmids through activation of initiation proteins. The polypeptide is Chaperone protein DnaJ (Serratia proteamaculans (strain 568)).